Reading from the N-terminus, the 205-residue chain is Protein PYRAB00100 (205 aa).

One can recognise an AMMECR1 domain in the interval 7-201; it reads EWGEFLVRLA…EEYPRGPVRR (195 aa).

In Pyrococcus abyssi (strain GE5 / Orsay), this protein is Protein PYRAB00100.